A 574-amino-acid polypeptide reads, in one-letter code: DNA mismatch repair protein MutL (574 aa).

This sequence belongs to the DNA mismatch repair MutL/HexB family.

This protein is involved in the repair of mismatches in DNA. It is required for dam-dependent methyl-directed DNA mismatch repair. May act as a 'molecular matchmaker', a protein that promotes the formation of a stable complex between two or more DNA-binding proteins in an ATP-dependent manner without itself being part of a final effector complex. The chain is DNA mismatch repair protein MutL from Coxiella burnetii (strain Dugway 5J108-111).